Reading from the N-terminus, the 153-residue chain is Ribosome maturation factor RimP (153 aa).

It belongs to the RimP family.

The protein resides in the cytoplasm. Functionally, required for maturation of 30S ribosomal subunits. The chain is Ribosome maturation factor RimP from Nostoc sp. (strain PCC 7120 / SAG 25.82 / UTEX 2576).